Reading from the N-terminus, the 219-residue chain is Ran-specific GTPase-activating protein 1 (219 aa).

Composition is skewed to basic and acidic residues over residues 1-12, 33-45, and 57-72; these read MAEVERKEEQAK, AVGD…EAKK, and PRKD…DNID. The tract at residues 1–72 is disordered; sequence MAEVERKEEQ…KGGEERDNID (72 aa). The RanBD1 domain occupies 70–210; that stretch reads NIDAAEVVEK…YDLGRAHNEK (141 aa).

The protein belongs to the RANBP1 family.

Its subcellular location is the cytoplasm. It localises to the nucleus. Functionally, important for the export of protein containing nuclear export signal (NES) out of the nucleus. This Encephalitozoon cuniculi (strain GB-M1) (Microsporidian parasite) protein is Ran-specific GTPase-activating protein 1 (YRB1).